We begin with the raw amino-acid sequence, 572 residues long: 3-ketosteroid oxygenase (572 aa).

Helical transmembrane passes span 52–72 (AFAL…RNFL) and 84–104 (YFMR…FIRI).

It belongs to the cytochrome P450 family. In terms of tissue distribution, expressed in the 2 embryonic head hypodermal cells XXXL/R.

The protein resides in the membrane. It catalyses the reaction 5alpha-cholest-7-en-3-one + 3 reduced [NADPH--hemoprotein reductase] + 3 O2 = (25S)-Delta7-dafachronate + 3 oxidized [NADPH--hemoprotein reductase] + 4 H2O + 4 H(+). The catalysed reaction is cholest-4-en-3-one + 3 reduced [NADPH--hemoprotein reductase] + 3 O2 = (25S)-3-oxocholest-4-en-26-oate + 3 oxidized [NADPH--hemoprotein reductase] + 4 H2O + 4 H(+). Its pathway is steroid hormone biosynthesis; dafachronic acid biosynthesis. Its function is as follows. Converts the 3-keto steroids 4-cholesten-3-one and lathosterone into the carboxylic metabolites 3-keto-4-cholestenate (Delta(4)-dafachronic acid, Delta(4)-DA) and 3-keto-7,(5a)-cholestenate (Delta(7)-dafachronic acid, Delta(7)-DA) respectively, by catalyzing successive oxidations at C-26. Dafachronic acids bind directly to the nuclear hormone receptor (NHR) DAF-12, suppressing dauer formation and inducing reproductive growth. In a non-cell autonomous manner, negatively regulates body wall muscle arm extensions to motor neurons probably by preventing daf-12 isoform b activation. May be involved in thermotolerance. The protein is 3-ketosteroid oxygenase (daf-9) of Caenorhabditis elegans.